The primary structure comprises 193 residues: Thymidine kinase (193 aa).

Residues Ser9–Ser16 and Asp87–Gln90 each bind ATP. The active-site Proton acceptor is the Glu88. Cys145, Cys147, Cys182, and His185 together coordinate Zn(2+).

This sequence belongs to the thymidine kinase family. In terms of assembly, homotetramer.

Its subcellular location is the cytoplasm. The enzyme catalyses thymidine + ATP = dTMP + ADP + H(+). This is Thymidine kinase from Idiomarina loihiensis (strain ATCC BAA-735 / DSM 15497 / L2-TR).